We begin with the raw amino-acid sequence, 762 residues long: 5-methyltetrahydropteroyltriglutamate--homocysteine methyltransferase (762 aa).

5-methyltetrahydropteroyltri-L-glutamate is bound by residues 17–20 and Lys111; that span reads REWK. L-homocysteine contacts are provided by residues 435–437 and Glu488; that span reads IGS. L-methionine is bound by residues 435-437 and Glu488; that span reads IGS. 5-methyltetrahydropteroyltri-L-glutamate-binding positions include 519-520 and Trp565; that span reads RC. Residue Asp603 participates in L-homocysteine binding. Residue Asp603 coordinates L-methionine. Glu609 serves as a coordination point for 5-methyltetrahydropteroyltri-L-glutamate. The Zn(2+) site is built by His645, Cys647, and Glu669. Residue His698 is the Proton donor of the active site. Position 730 (Cys730) interacts with Zn(2+).

Belongs to the vitamin-B12 independent methionine synthase family. The cofactor is Zn(2+).

It carries out the reaction 5-methyltetrahydropteroyltri-L-glutamate + L-homocysteine = tetrahydropteroyltri-L-glutamate + L-methionine. It functions in the pathway amino-acid biosynthesis; L-methionine biosynthesis via de novo pathway; L-methionine from L-homocysteine (MetE route): step 1/1. In terms of biological role, catalyzes the transfer of a methyl group from 5-methyltetrahydrofolate to homocysteine resulting in methionine formation. The sequence is that of 5-methyltetrahydropteroyltriglutamate--homocysteine methyltransferase from Bacillus cereus (strain AH187).